Consider the following 411-residue polypeptide: S-adenosylmethionine synthase (411 aa).

Histidine 15 lines the ATP pocket. Aspartate 17 lines the Mg(2+) pocket. Glutamate 43 lines the K(+) pocket. Glutamate 56 and glutamine 99 together coordinate L-methionine. The segment at 99 to 109 is flexible loop; it reads QSQEIAQGVDT. ATP contacts are provided by residues 179–181, aspartate 260, 266–267, alanine 283, and lysine 287; these read DGK and RK. Position 260 (aspartate 260) interacts with L-methionine. Lysine 291 lines the L-methionine pocket.

The protein belongs to the AdoMet synthase family. Homotetramer; dimer of dimers. Mg(2+) serves as cofactor. Requires K(+) as cofactor.

It is found in the cytoplasm. It carries out the reaction L-methionine + ATP + H2O = S-adenosyl-L-methionine + phosphate + diphosphate. It participates in amino-acid biosynthesis; S-adenosyl-L-methionine biosynthesis; S-adenosyl-L-methionine from L-methionine: step 1/1. Catalyzes the formation of S-adenosylmethionine (AdoMet) from methionine and ATP. The overall synthetic reaction is composed of two sequential steps, AdoMet formation and the subsequent tripolyphosphate hydrolysis which occurs prior to release of AdoMet from the enzyme. The sequence is that of S-adenosylmethionine synthase from Corynebacterium jeikeium (strain K411).